The primary structure comprises 476 residues: Serine/threonine-protein kinase Chk1 (476 aa).

The 257-residue stretch at 9–265 (WDLVQTLGEG…IPDIKKDRWY (257 aa)) folds into the Protein kinase domain. ATP contacts are provided by residues 15–23 (LGEGAYGEV) and Lys38. Asp130 acts as the Proton acceptor in catalysis. Residues 272–329 (GTKRGRVSSGGVTESPGALPKHIRSDTDFSPVKSALGEDKASYSTSQPEPGTGGALWD) are disordered. Ser280 bears the Phosphoserine; by PKB/AKT1 mark. Ser296 is modified (phosphoserine). Ser317 bears the Phosphoserine; by ATM and ATR mark. The residue at position 345 (Ser345) is a Phosphoserine. The segment at 391-476 (RSLRDVCEKM…STQKVWLPPP (86 aa)) is autoinhibitory region.

It belongs to the protein kinase superfamily. CAMK Ser/Thr protein kinase family. NIM1 subfamily. Post-translationally, phosphorylated by ATR in a RAD17-dependent manner in response to ultraviolet irradiation and inhibition of DNA replication. Phosphorylated by ATM in response to ionizing irradiation. Phosphorylation at Ser-345 induces a change in the conformation of the protein and activates the kinase activity. Phosphorylation at Ser-345 also increases binding to 14-3-3 proteins and promotes nuclear retention.

The protein localises to the nucleus. It is found in the chromosome. It localises to the cytoplasm. Its subcellular location is the cytoskeleton. The protein resides in the microtubule organizing center. The protein localises to the centrosome. The catalysed reaction is L-seryl-[protein] + ATP = O-phospho-L-seryl-[protein] + ADP + H(+). The enzyme catalyses L-threonyl-[protein] + ATP = O-phospho-L-threonyl-[protein] + ADP + H(+). With respect to regulation, activated through phosphorylation by atr or atm in response to DNA damage or inhibition of DNA replication. Functionally, serine/threonine-protein kinase which is required for checkpoint-mediated cell cycle arrest and activation of DNA repair in response to the presence of DNA damage or unreplicated DNA. May also negatively regulate cell cycle progression during unperturbed cell cycles. This regulation is achieved by a number of mechanisms that together help to preserve the integrity of the genome. Recognizes the substrate consensus sequence [R-X-X-S/T]. Binds to and phosphorylates CDC25A, CDC25B and CDC25C. This inhibits their activity through proteasomal degradation, nucleo-cytoplasmic shuttling and inhibition by proteins of the 13-3-3 family. Inhibition of CDC25 leads to increased inhibitory tyrosine phosphorylation of CDK-cyclin complexes and blocks cell cycle progression. May promote DNA repair, regulate chromatin assembly and the transcription of genes that regulate cell-cycle progression. May also play a role in replication fork maintenance. The protein is Serine/threonine-protein kinase Chk1 (CHEK1) of Gallus gallus (Chicken).